The primary structure comprises 229 residues: uncharacterized protein (229 aa).

Transmembrane regions (helical) follow at residues 1–21 (MFGTIFNTVMIIAGSIIGGIF), 32–52 (ILMQAMGFAAVALGINAITQH), 58–78 (YPILFIVSLAIGGLLGQIINL), 100–120 (TAVLLFCIGSLSILGPVEAAL), 139–159 (IVLASTFGFGIAAAALVLFSW), 178–198 (LINEITIVGGILILSSGLSIL), and 206–226 (LNLLPSLLIPPVVIFVIHAFG).

The protein localises to the cell membrane. This is an uncharacterized protein from Bacillus subtilis (strain 168).